We begin with the raw amino-acid sequence, 361 residues long: Adenosine kinase (361 aa).

Residues 7–15 (PKPKKLKVE) carry the Nuclear localization signal motif. Position 34 (aspartate 34) interacts with adenosine. Serine 48 provides a ligand contact to Mg(2+). Tyrosine 76 is modified (phosphotyrosine). 2 residues coordinate Mg(2+): aspartate 146 and asparagine 147. An adenosine-binding site is contributed by glutamine 305. Aspartate 316 is a catalytic residue. Aspartate 316 functions as the Proton acceptor in the catalytic mechanism.

The protein belongs to the carbohydrate kinase PfkB family. As to quaternary structure, monomer. The cofactor is Mg(2+). In terms of processing, the N-terminus is blocked.

The protein resides in the nucleus. It catalyses the reaction adenosine + ATP = AMP + ADP + H(+). Its pathway is purine metabolism; AMP biosynthesis via salvage pathway; AMP from adenosine: step 1/1. Its activity is regulated as follows. Activity is inhibited by 5-iodotubercidin and 5'-amino-5'-deoxyadenosine. Catalyzes the phosphorylation of the purine nucleoside adenosine at the 5' position in an ATP-dependent manner. Serves as a potential regulator of concentrations of extracellular adenosine and intracellular adenine nucleotides. In Cricetulus griseus (Chinese hamster), this protein is Adenosine kinase (ADK).